A 247-amino-acid chain; its full sequence is Probable transcriptional regulatory protein ETA_14870 (247 aa).

Residues 1 to 20 (MAGHSKWANTKHRKAAQDAK) form a disordered region.

It belongs to the TACO1 family.

The protein resides in the cytoplasm. The chain is Probable transcriptional regulatory protein ETA_14870 from Erwinia tasmaniensis (strain DSM 17950 / CFBP 7177 / CIP 109463 / NCPPB 4357 / Et1/99).